The following is a 336-amino-acid chain: Glycerol-3-phosphate dehydrogenase [NAD(P)+] (336 aa).

NADPH is bound by residues W11, R33, and K105. Sn-glycerol 3-phosphate-binding residues include K105, G141, and S143. A145 contributes to the NADPH binding site. K196, D249, S259, R260, and N261 together coordinate sn-glycerol 3-phosphate. The active-site Proton acceptor is the K196. R260 lines the NADPH pocket. Residues V284 and E286 each coordinate NADPH.

The protein belongs to the NAD-dependent glycerol-3-phosphate dehydrogenase family.

It is found in the cytoplasm. It carries out the reaction sn-glycerol 3-phosphate + NAD(+) = dihydroxyacetone phosphate + NADH + H(+). The enzyme catalyses sn-glycerol 3-phosphate + NADP(+) = dihydroxyacetone phosphate + NADPH + H(+). The protein operates within membrane lipid metabolism; glycerophospholipid metabolism. In terms of biological role, catalyzes the reduction of the glycolytic intermediate dihydroxyacetone phosphate (DHAP) to sn-glycerol 3-phosphate (G3P), the key precursor for phospholipid synthesis. This Delftia acidovorans (strain DSM 14801 / SPH-1) protein is Glycerol-3-phosphate dehydrogenase [NAD(P)+].